The primary structure comprises 391 residues: 2-deoxy-scyllo-inosose synthase (391 aa).

Residues Asp-42, 73 to 76 (EVHK), 105 to 109 (GVTGN), 129 to 130 (TT), 140 to 142 (SLK), and 151 to 152 (KN) contribute to the NAD(+) site. Residue Lys-142 is part of the active site. Co(2+) is bound at residue Glu-184. The active site involves Glu-244. Positions 247 and 263 each coordinate Co(2+).

The protein belongs to the sugar phosphate cyclases superfamily. DOI synthase family. The cofactor is NAD(+). Requires Co(2+) as cofactor.

It catalyses the reaction D-glucose 6-phosphate = 2-deoxy-L-scyllo-inosose + phosphate. The protein operates within metabolic intermediate biosynthesis; 2-deoxystreptamine biosynthesis; 2-deoxystreptamine from D-glucose 6-phosphate: step 1/4. It participates in antibiotic biosynthesis; ribostamycin biosynthesis. Catalyzes the intramolecular carbocycle formation from D-glucose-6-phosphate to 2-deoxy-scyllo-inosose (DOI). The sequence is that of 2-deoxy-scyllo-inosose synthase (rbmA) from Streptomyces ribosidificus.